The sequence spans 402 residues: Dynactin subunit 2 (402 aa).

Residues 1 to 26 (MADPKYADLPGIARNEPDVYETSDLP) form a disordered region. 2 coiled-coil regions span residues 101–132 (PQQRYQRLQHEVQELIRDVEQIQSAVKESAAE) and 357–402 (VHLD…KRLQ).

The protein belongs to the dynactin subunit 2 family. As to quaternary structure, subunit of dynactin, a multiprotein complex part of a tripartite complex with dynein and a adapter, such as BICDL1, BICD2 or HOOK3. The dynactin complex is built around ACTR1A/ACTB filament and consists of an actin-related filament composed of a shoulder domain, a pointed end and a barbed end. Its length is defined by its flexible shoulder domain. The soulder is composed of 2 DCTN1 subunits, 4 DCTN2 and 2 DCTN3.

It localises to the cytoplasm. It is found in the cytoskeleton. The protein localises to the microtubule organizing center. Its subcellular location is the centrosome. The protein resides in the membrane. Part of the dynactin complex that activates the molecular motor dynein for ultra-processive transport along microtubules. In the dynactin soulder domain, binds the ACTR1A filament and acts as a molecular ruler to determine the length. Modulates cytoplasmic dynein binding to an organelle, and plays a role in prometaphase chromosome alignment and spindle organization during mitosis. Involved in anchoring microtubules to centrosomes. The polypeptide is Dynactin subunit 2 (DCTN2) (Gallus gallus (Chicken)).